The chain runs to 237 residues: (5-formylfuran-3-yl)methyl phosphate synthase (237 aa).

Residue Lys29 is the Schiff-base intermediate with substrate of the active site. The active-site Proton acceptor is the Lys87.

It belongs to the MfnB family.

The enzyme catalyses 2 D-glyceraldehyde 3-phosphate = 4-(hydroxymethyl)-2-furancarboxaldehyde phosphate + phosphate + 2 H2O. The protein operates within cofactor biosynthesis; methanofuran biosynthesis. In terms of biological role, catalyzes the formation of 4-(hydroxymethyl)-2-furancarboxaldehyde phosphate (4-HFC-P) from two molecules of glyceraldehyde-3-P (GA-3-P). This Methanopyrus kandleri (strain AV19 / DSM 6324 / JCM 9639 / NBRC 100938) protein is (5-formylfuran-3-yl)methyl phosphate synthase.